The primary structure comprises 141 residues: Photosystem I reaction center subunit IV A, chloroplastic (141 aa).

Residues 1–49 constitute a chloroplast transit peptide; the sequence is MASCNMASAASNFLVATPNVASNTNTSRTTMLFFSSKNYGSTAPRLVVR. Positions 57 to 73 are enriched in low complexity; the sequence is PAAAATAEPAEAPVKAA. A disordered region spans residues 57–83; it reads PAAAATAEPAEAPVKAAKPPPIGPKRG.

It belongs to the PsaE family. Post-translationally, 2 isoforms exists (ratio 1:1). With or without the N-terminal alanine.

The protein resides in the plastid. It is found in the chloroplast thylakoid membrane. Stabilizes the interaction between PsaC and the PSI core, assists the docking of the ferredoxin to PSI and interacts with ferredoxin-NADP oxidoreductase. This Nicotiana sylvestris (Wood tobacco) protein is Photosystem I reaction center subunit IV A, chloroplastic (PSAEA).